Reading from the N-terminus, the 134-residue chain is MSWQAYVDDHLMCDIEGHEGHRLTAAAIVGQDGSVWAQSATFPQFKPEEMNGIMTDFNEPGHLAPTGLHLGGTKYMVIQGEAGAVIRGKKGSGGITIKKTGQALVFGIYEEPVTPGQCNMVVERLGDYLLEQGL.

A disulfide bridge connects residues cysteine 13 and cysteine 118. An Involved in PIP2 interaction motif is present at residues 84–100 (AVIRGKKGSGGITIKKT). The residue at position 114 (threonine 114) is a Phosphothreonine.

It belongs to the profilin family. Occurs in many kinds of cells as a complex with monomeric actin in a 1:1 ratio. In terms of processing, phosphorylated by MAP kinases.

The protein localises to the cytoplasm. It localises to the cytoskeleton. Functionally, binds to actin and affects the structure of the cytoskeleton. At high concentrations, profilin prevents the polymerization of actin, whereas it enhances it at low concentrations. The protein is Profilin-3 of Olea europaea (Common olive).